The chain runs to 98 residues: Putative pterin-4-alpha-carbinolamine dehydratase (98 aa).

It belongs to the pterin-4-alpha-carbinolamine dehydratase family.

It catalyses the reaction (4aS,6R)-4a-hydroxy-L-erythro-5,6,7,8-tetrahydrobiopterin = (6R)-L-erythro-6,7-dihydrobiopterin + H2O. The sequence is that of Putative pterin-4-alpha-carbinolamine dehydratase from Roseobacter denitrificans (strain ATCC 33942 / OCh 114) (Erythrobacter sp. (strain OCh 114)).